The sequence spans 322 residues: Triosephosphate isomerase, chloroplastic (322 aa).

A chloroplast-targeting transit peptide spans 1-67 (MAVVSTSLAS…RRCPRGVVAM (67 aa)). 2 residues coordinate substrate: Asn78 and Lys80. His162 functions as the Electrophile in the catalytic mechanism. Glu232 acts as the Proton acceptor in catalysis.

The protein belongs to the triosephosphate isomerase family. As to quaternary structure, homodimer.

Its subcellular location is the plastid. It is found in the chloroplast. It catalyses the reaction D-glyceraldehyde 3-phosphate = dihydroxyacetone phosphate. It participates in carbohydrate biosynthesis; Calvin cycle. This chain is Triosephosphate isomerase, chloroplastic (TPIP1), found in Spinacia oleracea (Spinach).